A 387-amino-acid chain; its full sequence is Deoxyguanosinetriphosphate triphosphohydrolase-like protein (387 aa).

The interval 1-26 is disordered; the sequence is MTAPYASDPQRARGRRVKEEESTFRS. Over residues 17-26 the composition is skewed to basic and acidic residues; sequence VKEEESTFRS. The region spanning 62–198 is the HD domain; it reads RLTHSIEVAQ…AAIADDVAYN (137 aa).

Belongs to the dGTPase family. Type 2 subfamily.

The chain is Deoxyguanosinetriphosphate triphosphohydrolase-like protein from Roseobacter denitrificans (strain ATCC 33942 / OCh 114) (Erythrobacter sp. (strain OCh 114)).